The following is a 427-amino-acid chain: C4-dicarboxylate TRAP transporter large permease protein DctM (427 aa).

13 helical membrane passes run 2-22 (TILF…PIAV), 55-75 (TLLA…GGVA), 91-111 (GGLA…SGSS), 115-135 (VAAV…PQAF), 138-158 (GIVC…VMVV), 171-191 (FIAG…VIYI), 216-236 (ALWG…GAFT), 237-257 (PTEA…FVYR), 274-294 (LTIM…VLTT), 310-330 (LSPW…GNFM), 335-355 (IILI…IDPI), 359-379 (IIMV…LNLF), and 396-416 (ALPW…IPAV).

Belongs to the TRAP transporter large permease family. In terms of assembly, the complex comprises the extracytoplasmic solute receptor protein DctP, and the two transmembrane proteins DctQ and DctM.

The protein localises to the cell inner membrane. Its function is as follows. Part of the tripartite ATP-independent periplasmic (TRAP) transport system DctPQM involved in C4-dicarboxylates uptake. This chain is C4-dicarboxylate TRAP transporter large permease protein DctM, found in Pseudomonas aeruginosa (strain ATCC 15692 / DSM 22644 / CIP 104116 / JCM 14847 / LMG 12228 / 1C / PRS 101 / PAO1).